The chain runs to 123 residues: WAP four-disulfide core domain protein 5 (123 aa).

The N-terminal stretch at 1–24 (MRIQSLLLLGALLAVGSQLPAVFG) is a signal peptide. WAP domains follow at residues 27–73 (KGEK…CIPR) and 74–121 (VSVK…RDPA). 8 disulfide bridges follow: Cys34–Cys62, Cys41–Cys66, Cys49–Cys61, Cys55–Cys70, Cys81–Cys109, Cys88–Cys113, Cys96–Cys108, and Cys102–Cys117.

It is found in the secreted. In terms of biological role, putative acid-stable proteinase inhibitor. This chain is WAP four-disulfide core domain protein 5 (WFDC5), found in Macaca mulatta (Rhesus macaque).